Reading from the N-terminus, the 119-residue chain is Putative ankyrin repeat domain-containing protein 26-like 1 (119 aa).

A coiled-coil region spans residues 15-112 (EKEEDLLHKN…EKQSRQRLTK (98 aa)).

The protein is Putative ankyrin repeat domain-containing protein 26-like 1 (ANKRD36BP1) of Homo sapiens (Human).